The sequence spans 707 residues: Elongation factor G (707 aa).

The tr-type G domain occupies 8–296 (ERYRNFGIMA…AVVDFLPAPT (289 aa)). GTP-binding positions include 17-24 (AHIDAGKT), 94-98 (DTPGH), and 148-151 (NKMD).

This sequence belongs to the TRAFAC class translation factor GTPase superfamily. Classic translation factor GTPase family. EF-G/EF-2 subfamily.

The protein localises to the cytoplasm. Functionally, catalyzes the GTP-dependent ribosomal translocation step during translation elongation. During this step, the ribosome changes from the pre-translocational (PRE) to the post-translocational (POST) state as the newly formed A-site-bound peptidyl-tRNA and P-site-bound deacylated tRNA move to the P and E sites, respectively. Catalyzes the coordinated movement of the two tRNA molecules, the mRNA and conformational changes in the ribosome. The sequence is that of Elongation factor G from Paracoccus denitrificans (strain Pd 1222).